Consider the following 268-residue polypeptide: Undecaprenyl-diphosphatase (268 aa).

The next 7 membrane-spanning stretches (helical) occupy residues 47–67, 83–103, 109–129, 144–164, 184–204, 218–238, and 246–266; these read FAILIQLGAILAIVALYFFKL, FIIGVLIAFLPAVIIGLIAGK, LFDPWVVCFSLIVGGAILLWV, YPLLMYLWIGVAQCLAMIPGV, AAEFSFFLAIPTMVGAFVYDF, LVAIGFVVSFITAMIVVKAFL, and FVLFAWWRVIVGTLGLIALAL.

It belongs to the UppP family.

Its subcellular location is the cell inner membrane. It catalyses the reaction di-trans,octa-cis-undecaprenyl diphosphate + H2O = di-trans,octa-cis-undecaprenyl phosphate + phosphate + H(+). In terms of biological role, catalyzes the dephosphorylation of undecaprenyl diphosphate (UPP). Confers resistance to bacitracin. This chain is Undecaprenyl-diphosphatase, found in Bradyrhizobium sp. (strain BTAi1 / ATCC BAA-1182).